Here is an 80-residue protein sequence, read N- to C-terminus: Trefoil factor 3 (80 aa).

An N-terminal signal peptide occupies residues 1 to 21; it reads MAARALCMLGLVLALLSSSSA. The region spanning 30–73 is the P-type domain; that stretch reads NQCAVPAKDRVDCGYPHVTPKECNNRGCCFDSRIPGVPWCFKPL. Disulfide bonds link Cys-32-Cys-58, Cys-42-Cys-57, and Cys-52-Cys-69.

In terms of assembly, monomer. Homodimer; disulfide-linked. In terms of tissue distribution, expressed in goblet cells of the intestines and colon (at protein level). Expressed by goblet cells of small and large intestinal epithelia and also by the uterus. Also expressed in the hypothalamus where it is detected in paraventricular, periventricular and supraoptic nuclei (at protein level).

It is found in the secreted. The protein localises to the extracellular space. The protein resides in the extracellular matrix. Its subcellular location is the cytoplasm. In terms of biological role, involved in the maintenance and repair of the intestinal mucosa. Promotes the mobility of epithelial cells in healing processes (motogen). This chain is Trefoil factor 3 (TFF3), found in Homo sapiens (Human).